An 86-amino-acid chain; its full sequence is MSKQPVSNVRAIQANINIPMGAFRPGAGQPPRKKECTPETEEAVLPTSDEEKKPIPGAKKLPGPAVNLSEIQNIKSELKYVPRAEQ.

The tract at residues 20–64 is disordered; sequence MGAFRPGAGQPPRKKECTPETEEAVLPTSDEEKKPIPGAKKLPGP.

This sequence belongs to the SMPX family. In terms of tissue distribution, high level of expression found in the heart and skeletal muscle, a very low expression in the lung and spleen and no expression found in the liver, kidney, fat and brain.

Its function is as follows. Plays a role in the regulatory network through which muscle cells coordinate their structural and functional states during growth, adaptation, and repair. In Sus scrofa (Pig), this protein is Small muscular protein (SMPX).